The sequence spans 543 residues: CTP synthase (543 aa).

The amidoligase domain stretch occupies residues 1–270; sequence MNNLTSTKFI…DTQILKHFNI (270 aa). S18 serves as a coordination point for CTP. S18 provides a ligand contact to UTP. ATP-binding positions include 19-24 and D76; that span reads SLGKGL. D76 and E144 together coordinate Mg(2+). CTP is bound by residues 151–153, 191–196, and K227; these read DIE and KTKPTQ. Residues 191 to 196 and K227 contribute to the UTP site; that span reads KTKPTQ. In terms of domain architecture, Glutamine amidotransferase type-1 spans 295-537; it reads TIAIIGKYIK…IQASLNYQET (243 aa). G356 provides a ligand contact to L-glutamine. Catalysis depends on C383, which acts as the Nucleophile; for glutamine hydrolysis. L-glutamine is bound by residues 384–387, E407, and R462; that span reads MGMQ. Active-site residues include H510 and E512.

This sequence belongs to the CTP synthase family. In terms of assembly, homotetramer.

The enzyme catalyses UTP + L-glutamine + ATP + H2O = CTP + L-glutamate + ADP + phosphate + 2 H(+). The catalysed reaction is L-glutamine + H2O = L-glutamate + NH4(+). It carries out the reaction UTP + NH4(+) + ATP = CTP + ADP + phosphate + 2 H(+). The protein operates within pyrimidine metabolism; CTP biosynthesis via de novo pathway; CTP from UDP: step 2/2. With respect to regulation, allosterically activated by GTP, when glutamine is the substrate; GTP has no effect on the reaction when ammonia is the substrate. The allosteric effector GTP functions by stabilizing the protein conformation that binds the tetrahedral intermediate(s) formed during glutamine hydrolysis. Inhibited by the product CTP, via allosteric rather than competitive inhibition. Catalyzes the ATP-dependent amination of UTP to CTP with either L-glutamine or ammonia as the source of nitrogen. Regulates intracellular CTP levels through interactions with the four ribonucleotide triphosphates. The protein is CTP synthase of Ehrlichia ruminantium (strain Gardel).